An 89-amino-acid chain; its full sequence is Small ribosomal subunit protein uS14A (89 aa).

The protein belongs to the universal ribosomal protein uS14 family. As to quaternary structure, part of the 30S ribosomal subunit. Contacts proteins S3 and S10.

Binds 16S rRNA, required for the assembly of 30S particles and may also be responsible for determining the conformation of the 16S rRNA at the A site. The polypeptide is Small ribosomal subunit protein uS14A (Ligilactobacillus salivarius (strain UCC118) (Lactobacillus salivarius)).